We begin with the raw amino-acid sequence, 1138 residues long: Nonsense-mediated mRNA decay factor SMG7 (1138 aa).

An N-acetylserine modification is found at Ser2. TPR repeat units follow at residues 152 to 185 and 187 to 219; these read QHCLVHLGDIARYRNQTSQAESYYRHAAQLVPSN and QPYNQLAILASSKGDHLTTIFYYCRSIAVKFPF. Disordered stretches follow at residues 515–612, 649–745, 838–871, 990–1090, and 1106–1138; these read ATDG…LPSR, STAH…YQQA, QPNMDRRSKRSPGVFRPEQDPVPRMPFEDPKSSP, SLPA…PSME, and SSMMHPGPSALEQLLMQQKQKQQRGQGAMNPPH. The residue at position 519 (Ser519) is a Phosphoserine. The segment covering 525-537 has biased composition (polar residues); the sequence is VLSTGRNPSNSCD. The span at 548–582 shows a compositional bias: basic and acidic residues; it reads ENIKPREVNQGRSFPPKEVKSQTELRKTPVSEARK. Position 575 is a phosphothreonine (Thr575). Composition is skewed to polar residues over residues 584–597 and 649–673; these read PVTQTPSQTSNSQF and STAHSPAGNQVQAGKQSHIPYSQQR. Over residues 674–721 the composition is skewed to low complexity; that stretch reads PSGPGPMNQGPQQSQPPSQPPLTSLPAQPTAQSTSQLQVQALAQQQQS. 2 positions are modified to phosphoserine: Ser732 and Ser848. Positions 854–868 are enriched in basic and acidic residues; sequence PEQDPVPRMPFEDPK. Over residues 990–999 the composition is skewed to polar residues; that stretch reads SLPASSDHST. Residues 1000-1026 are compositionally biased toward low complexity; that stretch reads PASQSPHSSNPSSLPSSPPTHNHNSAP. The segment covering 1037 to 1051 has biased composition (basic and acidic residues); the sequence is DNRDRRPADRWKTDK. Over residues 1063 to 1082 the composition is skewed to polar residues; it reads SATSSSESSWHQASTPSGTW. Residues 1118–1132 show a composition bias toward low complexity; that stretch reads QLLMQQKQKQQRGQG.

In terms of assembly, part of a complex that contains SMG5, SMG7, PPP2CA, a short isoform of UPF3A (isoform UPF3AS, but not isoform UPF3AL) and phosphorylated UPF1. Interacts with DHX34; the interaction is RNA-independent.

The protein localises to the cytoplasm. Its subcellular location is the nucleus. Functionally, plays a role in nonsense-mediated mRNA decay. Recruits UPF1 to cytoplasmic mRNA decay bodies. Together with SMG5 is thought to provide a link to the mRNA degradation machinery involving exonucleolytic pathways, and to serve as an adapter for UPF1 to protein phosphatase 2A (PP2A), thereby triggering UPF1 dephosphorylation. This chain is Nonsense-mediated mRNA decay factor SMG7, found in Mus musculus (Mouse).